Here is a 139-residue protein sequence, read N- to C-terminus: Probable DNA-binding protein (139 aa).

The tract at residues 97–139 is disordered; sequence DEPSREASPDLGAAGAELEDESAQAGAVQGPETLRSQVLRART.

In Homo sapiens (Human), this protein is Probable DNA-binding protein.